Here is a 42-residue protein sequence, read N- to C-terminus: Packaging protein P20 (42 aa).

Residues 11 to 31 traverse the membrane as a helical segment; it reads INWLIVILMLTIAGMAATLVC.

Heterodimer of P20 and P22; further multimerizes as hexamers of heterodimers. Part of the dodecameric portal complex that is composed of the packaging efficiency factor P6, the DNA packaging ATPase P9, and the internal heterododecamer P20/P22 which spans the virion inner membrane.

The protein resides in the virion membrane. In terms of biological role, together with P22, forms the internal part of the portal complex embeded in the virion internal membrane and which plays critical roles in genome packaging and genome ejection. Both proteins multimerize as a single ring-shaped heterdodecamer arranged around a central channel and interact with the P6/P9 external part of the portal. The polypeptide is Packaging protein P20 (XX) (Acinetobacter calcoaceticus (Arthrobacter siderocapsulatus)).